Here is a 142-residue protein sequence, read N- to C-terminus: D-aminoacyl-tRNA deacylase (142 aa).

The Gly-cisPro motif, important for rejection of L-amino acids signature appears at 133–134 (GP).

Belongs to the DTD family. In terms of assembly, homodimer.

It is found in the cytoplasm. The catalysed reaction is glycyl-tRNA(Ala) + H2O = tRNA(Ala) + glycine + H(+). It carries out the reaction a D-aminoacyl-tRNA + H2O = a tRNA + a D-alpha-amino acid + H(+). In terms of biological role, an aminoacyl-tRNA editing enzyme that deacylates mischarged D-aminoacyl-tRNAs. Also deacylates mischarged glycyl-tRNA(Ala), protecting cells against glycine mischarging by AlaRS. Acts via tRNA-based rather than protein-based catalysis; rejects L-amino acids rather than detecting D-amino acids in the active site. By recycling D-aminoacyl-tRNA to D-amino acids and free tRNA molecules, this enzyme counteracts the toxicity associated with the formation of D-aminoacyl-tRNA entities in vivo and helps enforce protein L-homochirality. In Acidothermus cellulolyticus (strain ATCC 43068 / DSM 8971 / 11B), this protein is D-aminoacyl-tRNA deacylase.